We begin with the raw amino-acid sequence, 242 residues long: Agamous-like MADS-box protein MADS4 (242 aa).

In terms of domain architecture, MADS-box spans 1–61 (MGRGRVELKR…GKLYEFCSSS (61 aa)). Residues 89 to 185 (ELSSQQEYLK…GTQVNQLQWN (97 aa)) form the K-box domain.

As to expression, expressed in flowers and seeds.

It localises to the nucleus. Its function is as follows. Probable transcription factor involved in flower development. In Vitis vinifera (Grape), this protein is Agamous-like MADS-box protein MADS4.